The following is a 478-amino-acid chain: D-ribulose kinase (478 aa).

The N-terminal 38 residues, 1–38 (MLILRQFQISSFELFQSPKQTGFYSSSRSVPLPRTRFY), are a transit peptide targeting the chloroplast. Substrate is bound by residues D60, 64-67 (SGGR), and D278. Residues S300, G338, and 433-437 (GGAKN) contribute to the ATP site.

Belongs to the FGGY kinase family. It depends on a divalent metal cation as a cofactor.

It is found in the plastid. It localises to the chloroplast. The enzyme catalyses D-ribulose + ATP = D-ribulose 5-phosphate + ADP + H(+). In terms of biological role, exhibits ATP hydrolysis without substrate. Can phosphorylate D-ribulose with low efficiency. The polypeptide is D-ribulose kinase (Arabidopsis thaliana (Mouse-ear cress)).